A 237-amino-acid chain; its full sequence is Putative ATP-binding protein BMEII0108 (237 aa).

The ABC transporter domain maps to 5 to 205 (ISFNNVVMRY…DLPYPRTEAI (201 aa)). 37-44 (GPSGCGKS) lines the ATP pocket.

The protein belongs to the ABC transporter superfamily. In terms of assembly, the complex is composed of two ATP-binding proteins (BMEII0108), two transmembrane proteins (BMEII0107) and a solute-binding protein (BMEII0109).

The protein localises to the cell inner membrane. In terms of biological role, probably part of an ABC transporter complex. Probably Responsible for energy coupling to the transport system. This is Putative ATP-binding protein BMEII0108 from Brucella melitensis biotype 1 (strain ATCC 23456 / CCUG 17765 / NCTC 10094 / 16M).